A 401-amino-acid polypeptide reads, in one-letter code: Nicotinamide/nicotinic acid mononucleotide adenylyltransferase 1 (401 aa).

Disordered regions lie at residues 1-30 (MDPTRAPDFKPPSADEELIPPPDPESKIPK) and 48-123 (APFN…RGVQ). A compositionally biased stretch (basic residues) spans 52–69 (IKRKKKHPKHHHHHHHSR). A phosphoserine mark is found at S91, S95, S96, and S111. S173 and F174 together coordinate NAD(+). H181 lines the ATP pocket. Positions 253, 288, 290, 301, 320, and 351 each coordinate NAD(+). ATP is bound at residue 356–359 (TKVR).

The protein belongs to the eukaryotic NMN adenylyltransferase family. Homotetramer. Ni(2+) serves as cofactor.

The protein localises to the cytoplasm. The protein resides in the nucleus. The catalysed reaction is beta-nicotinamide D-ribonucleotide + ATP + H(+) = diphosphate + NAD(+). The enzyme catalyses nicotinate beta-D-ribonucleotide + ATP + H(+) = deamido-NAD(+) + diphosphate. It functions in the pathway cofactor biosynthesis; NAD(+) biosynthesis; deamido-NAD(+) from nicotinate D-ribonucleotide: step 1/1. The protein operates within cofactor biosynthesis; NAD(+) biosynthesis; NAD(+) from nicotinamide D-ribonucleotide: step 1/1. In terms of biological role, catalyzes the formation of NAD(+) from nicotinamide mononucleotide (NMN) and ATP. Can also use the deamidated form; nicotinic acid mononucleotide (NaMN) as substrate to form deamido-NAD(+) (NaAD). Key enzyme in both de novo and salvage pathways for NAD(+) biosynthesis. Predominantly acts in the salvage pathways via NMN. The protein is Nicotinamide/nicotinic acid mononucleotide adenylyltransferase 1 of Saccharomyces cerevisiae (strain ATCC 204508 / S288c) (Baker's yeast).